The following is a 155-amino-acid chain: Small ribosomal subunit protein uS7 (155 aa).

The protein belongs to the universal ribosomal protein uS7 family. In terms of assembly, part of the 30S ribosomal subunit. Contacts proteins S9 and S11.

In terms of biological role, one of the primary rRNA binding proteins, it binds directly to 16S rRNA where it nucleates assembly of the head domain of the 30S subunit. Is located at the subunit interface close to the decoding center, probably blocks exit of the E-site tRNA. In Corynebacterium glutamicum (strain R), this protein is Small ribosomal subunit protein uS7.